We begin with the raw amino-acid sequence, 321 residues long: Tetraacyldisaccharide 4'-kinase (321 aa).

54-61 contributes to the ATP binding site; the sequence is SVGGTGKT.

The protein belongs to the LpxK family.

The enzyme catalyses a lipid A disaccharide + ATP = a lipid IVA + ADP + H(+). It participates in glycolipid biosynthesis; lipid IV(A) biosynthesis; lipid IV(A) from (3R)-3-hydroxytetradecanoyl-[acyl-carrier-protein] and UDP-N-acetyl-alpha-D-glucosamine: step 6/6. In terms of biological role, transfers the gamma-phosphate of ATP to the 4'-position of a tetraacyldisaccharide 1-phosphate intermediate (termed DS-1-P) to form tetraacyldisaccharide 1,4'-bis-phosphate (lipid IVA). This is Tetraacyldisaccharide 4'-kinase from Rickettsia africae (strain ESF-5).